Here is a 285-residue protein sequence, read N- to C-terminus: HTH-type transcriptional regulator HexR (285 aa).

The region spanning 2 to 78 (KNLLEQIQSR…IQLAQSLASG (77 aa)) is the HTH rpiR-type domain. The H-T-H motif DNA-binding region spans 38 to 57 (IAALAQAAAVSEPTVNRFCR). In terms of domain architecture, SIS spans 122 to 261 (AVDLLIQARQ…ATGVTLRRGV (140 aa)).

Involved in regulation of glucose metabolism. Transcriptional repressor of the gap-1 gene and of the edd-glk-gltR-2 and zwf-pgl-eda operons. Acts by binding directly to an inverted pseudopalindromic sequence in the promoter region. In Pseudomonas aeruginosa (strain ATCC 15692 / DSM 22644 / CIP 104116 / JCM 14847 / LMG 12228 / 1C / PRS 101 / PAO1), this protein is HTH-type transcriptional regulator HexR.